The primary structure comprises 451 residues: Phosphoglucosamine mutase (451 aa).

Residue serine 101 is the Phosphoserine intermediate of the active site. Mg(2+)-binding residues include serine 101, aspartate 240, aspartate 242, and aspartate 244. The residue at position 101 (serine 101) is a Phosphoserine.

It belongs to the phosphohexose mutase family. It depends on Mg(2+) as a cofactor. Activated by phosphorylation.

The enzyme catalyses alpha-D-glucosamine 1-phosphate = D-glucosamine 6-phosphate. Functionally, catalyzes the conversion of glucosamine-6-phosphate to glucosamine-1-phosphate. This is Phosphoglucosamine mutase from Thioalkalivibrio sulfidiphilus (strain HL-EbGR7).